The sequence spans 202 residues: Virulence protein F (202 aa).

Residues 1 to 15 (MRNSSLRDASGSNDA) show a composition bias toward polar residues. Residues 1–21 (MRNSSLRDASGSNDAQVPHKT) form a disordered region. The F-box domain maps to 20–42 (KTELLNLPDHVLTEVAKRLATNN).

Component of SCF(virF) E3 ubiquitin ligase complexes. Interacts with host VIP1 and SKP1A. Interacts with Arabidopsis thaliana ENAP1/VFP3 and VFP5 in the host cell nucleus.

The protein localises to the host nucleus. Its function is as follows. In the host plant, component of SCF(virF) E3 ubiquitin ligase complexes, which mediate the ubiquitination and subsequent proteasomal degradation of target proteins such as the host VIP1, after its implication in T-DNA translocation to the host nucleus. Required for the formation of tumors of a wild-type size on certain plant species only. The sequence is that of Virulence protein F from Agrobacterium tumefaciens (strain 15955).